Here is a 143-residue protein sequence, read N- to C-terminus: UPF0251 protein Rru_A1194 (143 aa).

Residues 100–143 (LDGSACPNRRQRRGPCARRGAAGALARQTGDEPPSSPTDNEKDD) are disordered. The segment covering 116 to 126 (ARRGAAGALAR) has biased composition (low complexity).

It belongs to the UPF0251 family.

This is UPF0251 protein Rru_A1194 from Rhodospirillum rubrum (strain ATCC 11170 / ATH 1.1.1 / DSM 467 / LMG 4362 / NCIMB 8255 / S1).